Here is a 291-residue protein sequence, read N- to C-terminus: Ribonuclease Z (291 aa).

Zn(2+)-binding residues include H61, H63, D65, H66, H133, D201, and H257. Residue D65 is the Proton acceptor of the active site.

It belongs to the RNase Z family. In terms of assembly, homodimer. Requires Zn(2+) as cofactor.

The catalysed reaction is Endonucleolytic cleavage of RNA, removing extra 3' nucleotides from tRNA precursor, generating 3' termini of tRNAs. A 3'-hydroxy group is left at the tRNA terminus and a 5'-phosphoryl group is left at the trailer molecule.. Functionally, zinc phosphodiesterase, which displays some tRNA 3'-processing endonuclease activity. Probably involved in tRNA maturation, by removing a 3'-trailer from precursor tRNA. The chain is Ribonuclease Z from Saccharolobus islandicus (strain M.16.27) (Sulfolobus islandicus).